The primary structure comprises 950 residues: Calcium-transporting ATPase 1 (950 aa).

Residue S2 is modified to N-acetylserine. Residues 2 to 92 (SDNPFNASLL…SLFKKFLSNF (91 aa)) lie on the Cytoplasmic side of the membrane. A helical membrane pass occupies residues 93–111 (IEDRMILLLIGSAVVSLFM). The Lumenal portion of the chain corresponds to 112 to 116 (GNIDD). A helical transmembrane segment spans residues 117–133 (AVSITLAIFIVVTVGFV). The Cytoplasmic segment spans residues 134–288 (QEYRSEKSLE…LQLTMDKLGK (155 aa)). Residue S227 is modified to Phosphoserine. A helical transmembrane segment spans residues 289-309 (DLSLVSFIVIGMICLVGIIQG). The Lumenal portion of the chain corresponds to 310–323 (RSWLEMFQISVSLA). Residues 324–344 (VAAIPEGLPIIVTVTLALGVL) traverse the membrane as a helical segment. The Cytoplasmic portion of the chain corresponds to 345-814 (RMAKRKAIVR…KILTHDVMKR (470 aa)). D371 serves as the catalytic 4-aspartylphosphate intermediate. Residues 815–835 (LLTTAACIIVGTVYIFVKEMA) form a helical membrane-spanning segment. Over 836–844 (EDGKVTARD) the chain is Lumenal. Residues 845 to 862 (TTMTFTCFVFFDMFNALA) traverse the membrane as a helical segment. The Cytoplasmic portion of the chain corresponds to 863 to 884 (CRHNTKSIFEIGFFTNKMFNYA). A helical transmembrane segment spans residues 885 to 905 (VGLSLLGQMCAIYIPFFQSIF). The Lumenal segment spans residues 906-909 (KTEK). A helical membrane pass occupies residues 910–930 (LGISDILLLLLISSSVFIVDE). Over 931–950 (LRKLWTRKKNEEDSTYFSNV) the chain is Cytoplasmic.

The protein belongs to the cation transport ATPase (P-type) (TC 3.A.3) family.

It localises to the golgi apparatus membrane. It carries out the reaction Ca(2+)(in) + ATP + H2O = Ca(2+)(out) + ADP + phosphate + H(+). This magnesium-dependent enzyme catalyzes the hydrolysis of ATP coupled with the transport of calcium. Has a role in the secretory pathway. This is Calcium-transporting ATPase 1 (PMR1) from Saccharomyces cerevisiae (strain ATCC 204508 / S288c) (Baker's yeast).